Here is a 312-residue protein sequence, read N- to C-terminus: uncharacterized protein (312 aa).

It localises to the mitochondrion. This is an uncharacterized protein from Schizosaccharomyces pombe (strain 972 / ATCC 24843) (Fission yeast).